Here is a 30-residue protein sequence, read N- to C-terminus: Hementerin (30 aa).

The cofactor is Ca(2+).

The protein resides in the secreted. Its activity is regulated as follows. Fibrino(geno)lytic activity inhibited by EDTA but not by PMSF, E-64, 6-AHA and aprotinin. Its function is as follows. Cleaves fibrinogen Aalpha (FGA), gamma (FGG) and Bbeta (FGB) chains. Degrades cross-linked fibrin. Has no amidolytic, plasminogenolytic or caseinolytic activity. Inhibits platelet aggregation induced by collagen (IC(50)=7.5ug/ml) and various other agonists, presumably via activation of a nitridergic pathway. Inhibition is accompanied by reduced ATP release from and surface expression of SELP and CD63 on platelets as well as increased intracellular levels of Ca(2+), cGMP and nitric oxide synthase activity. This Haementeria depressa (Leech) protein is Hementerin.